A 154-amino-acid chain; its full sequence is 6,7-dimethyl-8-ribityllumazine synthase (154 aa).

5-amino-6-(D-ribitylamino)uracil-binding positions include tryptophan 22, 56–58, and 80–82; these read AWE and CVI. 85 to 86 is a (2S)-2-hydroxy-3-oxobutyl phosphate binding site; sequence DT. Histidine 88 functions as the Proton donor in the catalytic mechanism. 5-amino-6-(D-ribitylamino)uracil is bound at residue asparagine 113. Arginine 127 is a (2S)-2-hydroxy-3-oxobutyl phosphate binding site.

It belongs to the DMRL synthase family. In terms of assembly, forms an icosahedral capsid composed of 60 subunits, arranged as a dodecamer of pentamers.

It carries out the reaction (2S)-2-hydroxy-3-oxobutyl phosphate + 5-amino-6-(D-ribitylamino)uracil = 6,7-dimethyl-8-(1-D-ribityl)lumazine + phosphate + 2 H2O + H(+). The protein operates within cofactor biosynthesis; riboflavin biosynthesis; riboflavin from 2-hydroxy-3-oxobutyl phosphate and 5-amino-6-(D-ribitylamino)uracil: step 1/2. Catalyzes the formation of 6,7-dimethyl-8-ribityllumazine by condensation of 5-amino-6-(D-ribitylamino)uracil with 3,4-dihydroxy-2-butanone 4-phosphate. This is the penultimate step in the biosynthesis of riboflavin. This is 6,7-dimethyl-8-ribityllumazine synthase from Xanthomonas campestris pv. campestris (strain 8004).